The primary structure comprises 295 residues: Protease HtpX homolog (295 aa).

2 consecutive transmembrane segments (helical) span residues 15-35 (LVMA…GYAF) and 39-59 (AQTG…VILG). Position 143 (histidine 143) interacts with Zn(2+). The active site involves glutamate 144. A Zn(2+)-binding site is contributed by histidine 147. Helical transmembrane passes span 159-179 (ALAL…AMWW) and 195-215 (VIML…ASMA). Residue glutamate 224 coordinates Zn(2+).

The protein belongs to the peptidase M48B family. It depends on Zn(2+) as a cofactor.

The protein resides in the cell membrane. In Ligilactobacillus salivarius (strain UCC118) (Lactobacillus salivarius), this protein is Protease HtpX homolog.